The chain runs to 154 residues: SsrA-binding protein (154 aa).

It belongs to the SmpB family.

It localises to the cytoplasm. Functionally, required for rescue of stalled ribosomes mediated by trans-translation. Binds to transfer-messenger RNA (tmRNA), required for stable association of tmRNA with ribosomes. tmRNA and SmpB together mimic tRNA shape, replacing the anticodon stem-loop with SmpB. tmRNA is encoded by the ssrA gene; the 2 termini fold to resemble tRNA(Ala) and it encodes a 'tag peptide', a short internal open reading frame. During trans-translation Ala-aminoacylated tmRNA acts like a tRNA, entering the A-site of stalled ribosomes, displacing the stalled mRNA. The ribosome then switches to translate the ORF on the tmRNA; the nascent peptide is terminated with the 'tag peptide' encoded by the tmRNA and targeted for degradation. The ribosome is freed to recommence translation, which seems to be the essential function of trans-translation. The sequence is that of SsrA-binding protein from Synechococcus sp. (strain JA-3-3Ab) (Cyanobacteria bacterium Yellowstone A-Prime).